Consider the following 300-residue polypeptide: Protein orai (300 aa).

Residues 1–128 (MPRSHDPSRV…SKAQLKASSR (128 aa)) are Cytoplasmic-facing. The interval 58 to 82 (QPPSSGGGSRNVGGGDGAAGNSKNG) is disordered. Over residues 62–75 (SGGGSRNVGGGDGA) the composition is skewed to gly residues. Residues 129-146 (TSALLAGFAMVCLVELQY) form a helical membrane-spanning segment. Over 147-153 (DDSTSKP) the chain is Extracellular. A helical membrane pass occupies residues 154–174 (LLIVLGVVTSLLVSVHLLALM). The Cytoplasmic portion of the chain corresponds to 175–205 (MSTCILPYMEATGCTQDSPHLKLKFYIDLSW). Residues 206–226 (LFSTCIGLLLFLVEIGVIFYV) traverse the membrane as a helical segment. Over 227–237 (KFTAVGYPTAG) the chain is Extracellular. A helical transmembrane segment spans residues 238-258 (YITTAMLIPVGIVFVLFSYLI). Residues 259 to 300 (HKNRVSHSLGRFKDKVDTMKQFLDVEANLQKSTIAPSTIRDI) lie on the Cytoplasmic side of the membrane.

This sequence belongs to the Orai family.

It is found in the membrane. Its function is as follows. Ca(2+) release-activated Ca(2+)-like (CRAC-like) channel subunit which mediates Ca(2+) influx and increase in Ca(2+)-selective current by synergy with the Ca(2+) sensor, stim-1. Required for Ca(2+) and IP3-dependent contractile activity of sheath cells and the spermatheca. Affects brood size and somatic cell function. This Caenorhabditis briggsae protein is Protein orai (orai-1).